The chain runs to 491 residues: Nuatigenin 3-beta-glucosyltransferase (491 aa).

Histidine 20 serves as the catalytic Proton acceptor. Histidine 20 lines the an anthocyanidin pocket. Aspartate 125 functions as the Charge relay in the catalytic mechanism. Residues alanine 352, glutamine 354, histidine 369, tryptophan 372, asparagine 373, serine 374, and glutamate 377 each coordinate UDP-alpha-D-glucose. Alanine 392 provides a ligand contact to an anthocyanidin. UDP-alpha-D-glucose is bound by residues glutamate 393 and glutamine 394.

Belongs to the UDP-glycosyltransferase family. As to expression, expressed in roots, stems and leaves.

It carries out the reaction nuatigenin + UDP-alpha-D-glucose = nuatigenin 3-beta-D-glucopyranoside + UDP + H(+). It catalyses the reaction diosgenin + UDP-alpha-D-glucose = diosgenin 3-O-beta-D-glucoside + UDP + H(+). The enzyme catalyses tigogenin + UDP-alpha-D-glucose = tigogenin 3-O-beta-D-glucopyranoside + UDP + H(+). The catalysed reaction is solasodine + UDP-alpha-D-glucose = solasodine 3-beta-D-glucoside + UDP + H(+). It carries out the reaction solanidine + UDP-alpha-D-glucose = solanidine 3-O-beta-D-glucopyranoside + UDP + H(+). It catalyses the reaction tomatidine + UDP-alpha-D-glucose = tomatidine 3-O-beta-D-glucopyranoside + UDP + H(+). Functionally, glucosyltransferase involved in steroid saponin biosynthesis. Catalyzes the 3-O-glucosylation of steroidal sapogenins, such as diosgenin, nuatigenin and tigogenin. Can glucosylate steroidal alkaloids, such as solanidine, solasodine and tomatidine. This is Nuatigenin 3-beta-glucosyltransferase from Solanum aculeatissimum (Dutch eggplant).